Consider the following 354-residue polypeptide: Ferrochelatase (354 aa).

Fe cation contacts are provided by His204 and Glu306.

This sequence belongs to the ferrochelatase family.

The protein localises to the cytoplasm. It carries out the reaction heme b + 2 H(+) = protoporphyrin IX + Fe(2+). Its pathway is porphyrin-containing compound metabolism; protoheme biosynthesis; protoheme from protoporphyrin-IX: step 1/1. In terms of biological role, catalyzes the ferrous insertion into protoporphyrin IX. This is Ferrochelatase from Coxiella burnetii (strain CbuK_Q154) (Coxiella burnetii (strain Q154)).